Here is a 661-residue protein sequence, read N- to C-terminus: Zeaxanthin epoxidase, chloroplastic (661 aa).

Residues 1 to 59 constitute a chloroplast transit peptide; that stretch reads MLLFRATLLPSPPFFHKTYFSHLSPVIFSDDPLPVSLQRNRVSGCRKQKWRQIRTLALQ. FAD is bound by residues 81-109 and 359-372; these read RILIAGGGIGGLVLALAAKKKGFDALVFE and IFTWGKGRVTLLGD. One can recognise an FHA domain in the interval 555–609; sequence HIIGSISHDDSEGISIHLPFPQVHKTHARIACKDNIFYLTDLQSQYGTWITDNEG.

FAD serves as cofactor. In terms of tissue distribution, expressed in flower buds, lips and leaves. Detected in roots.

It localises to the plastid. It is found in the chloroplast. It catalyses the reaction all-trans-zeaxanthin + 4 reduced [2Fe-2S]-[ferredoxin] + 2 O2 + 4 H(+) = all-trans-violaxanthin + 4 oxidized [2Fe-2S]-[ferredoxin] + 2 H2O. It participates in plant hormone biosynthesis; abscisate biosynthesis. Zeaxanthin epoxidase that plays an important role in the xanthophyll cycle and abscisic acid (ABA) biosynthesis. Converts zeaxanthin into antheraxanthin and subsequently violaxanthin. This is Zeaxanthin epoxidase, chloroplastic (ZEP) from Oncidium hybrid cultivar (Orchid).